The chain runs to 271 residues: Type III pantothenate kinase (271 aa).

Position 6 to 13 (6 to 13 (DVRNTNIV)) interacts with ATP. 109 to 112 (GADR) is a substrate binding site. Residue Asp111 is the Proton acceptor of the active site. Residue Asp131 coordinates K(+). Thr134 contacts ATP. A substrate-binding site is contributed by Thr186.

Belongs to the type III pantothenate kinase family. Homodimer. It depends on NH4(+) as a cofactor. The cofactor is K(+).

The protein localises to the cytoplasm. It catalyses the reaction (R)-pantothenate + ATP = (R)-4'-phosphopantothenate + ADP + H(+). It functions in the pathway cofactor biosynthesis; coenzyme A biosynthesis; CoA from (R)-pantothenate: step 1/5. Functionally, catalyzes the phosphorylation of pantothenate (Pan), the first step in CoA biosynthesis. The polypeptide is Type III pantothenate kinase (Rhodococcus erythropolis (strain PR4 / NBRC 100887)).